The chain runs to 356 residues: UDP-N-acetylglucosamine--N-acetylmuramyl-(pentapeptide) pyrophosphoryl-undecaprenol N-acetylglucosamine transferase (356 aa).

Residues 12 to 14 (TGG), Asn-124, Arg-163, Ser-188, Ile-242, and Gln-287 each bind UDP-N-acetyl-alpha-D-glucosamine.

The protein belongs to the glycosyltransferase 28 family. MurG subfamily.

The protein resides in the cell inner membrane. The enzyme catalyses di-trans,octa-cis-undecaprenyl diphospho-N-acetyl-alpha-D-muramoyl-L-alanyl-D-glutamyl-meso-2,6-diaminopimeloyl-D-alanyl-D-alanine + UDP-N-acetyl-alpha-D-glucosamine = di-trans,octa-cis-undecaprenyl diphospho-[N-acetyl-alpha-D-glucosaminyl-(1-&gt;4)]-N-acetyl-alpha-D-muramoyl-L-alanyl-D-glutamyl-meso-2,6-diaminopimeloyl-D-alanyl-D-alanine + UDP + H(+). Its pathway is cell wall biogenesis; peptidoglycan biosynthesis. In terms of biological role, cell wall formation. Catalyzes the transfer of a GlcNAc subunit on undecaprenyl-pyrophosphoryl-MurNAc-pentapeptide (lipid intermediate I) to form undecaprenyl-pyrophosphoryl-MurNAc-(pentapeptide)GlcNAc (lipid intermediate II). This Pseudomonas savastanoi pv. phaseolicola (strain 1448A / Race 6) (Pseudomonas syringae pv. phaseolicola (strain 1448A / Race 6)) protein is UDP-N-acetylglucosamine--N-acetylmuramyl-(pentapeptide) pyrophosphoryl-undecaprenol N-acetylglucosamine transferase.